A 202-amino-acid chain; its full sequence is Protein N-terminal glutamine amidohydrolase (202 aa).

Catalysis depends on residues Cys-27, His-80, and Asp-96.

Belongs to the NTAQ1 family. Monomer.

Its subcellular location is the cytoplasm. The protein resides in the cytosol. It localises to the nucleus. The catalysed reaction is N-terminal L-glutaminyl-[protein] + H2O = N-terminal L-glutamyl-[protein] + NH4(+). In terms of biological role, mediates the side-chain deamidation of N-terminal glutamine residues to glutamate, an important step in N-end rule pathway of protein degradation. Conversion of the resulting N-terminal glutamine to glutamate renders the protein susceptible to arginylation, polyubiquitination and degradation as specified by the N-end rule. Does not act on substrates with internal or C-terminal glutamine and does not act on non-glutamine residues in any position. Does not deaminate acetylated N-terminal glutamine. With the exception of proline, all tested second-position residues on substrate peptides do not greatly influence the activity. In contrast, a proline at position 2, virtually abolishes deamidation of N-terminal glutamine. The protein is Protein N-terminal glutamine amidohydrolase (ntaq1) of Danio rerio (Zebrafish).